Reading from the N-terminus, the 565-residue chain is Heme/hemopexin transporter protein HuxB (565 aa).

An N-terminal signal peptide occupies residues 1-26; sequence MKMRPRYSVIASAVSLGFVLSKSVMA. Residues 73 to 150 enclose the POTRA domain; the sequence is FPLKQVQILD…GTVKILLLKG (78 aa).

It belongs to the TPS (TC 1.B.20) family.

It is found in the cell outer membrane. Likely functions in the release of soluble HxuA from the cell. Its function is as follows. Probable member of a two partner secretion pathway (TPS) in which it mediates the secretion of HuxA. This chain is Heme/hemopexin transporter protein HuxB (hxuB), found in Haemophilus influenzae (strain ATCC 51907 / DSM 11121 / KW20 / Rd).